A 257-amino-acid polypeptide reads, in one-letter code: MSRKKTPKSKGGSVPAASTLPAAANGPRLAHPRTARPGPEAPPNGPPQSGRPSLGGTGDFYDVAFKVMLVGDSGVGKTCLLVRFKDGAFLAGTFISTVGIDFRNKVLDVDGMKVKLQIWDTAGQERFRSVTHAYYRDAHALLLLYDITNKDSFDNIQAWLTEIQEYAQQDVVLMLLGNKVDSTQERVVKREDGEKLAKEYGLPFMETSAKSGLNVDLAFTAIAKELKQRSTKAPSEPRFRLHDYVKREGRGVSCCRL.

The tract at residues 1–53 (MSRKKTPKSKGGSVPAASTLPAAANGPRLAHPRTARPGPEAPPNGPPQSGRPS) is disordered. Serine 73, glycine 74, valine 75, glycine 76, lysine 77, threonine 78, cysteine 79, serine 96, and threonine 97 together coordinate GTP. Threonine 78 serves as a coordination point for Mg(2+). 2 consecutive short sequence motifs (switch) follow at residues 87–102 (GAFL…GIDF) and 120–137 (DTAG…YYRD). Positions 97 and 120 each coordinate Mg(2+). Positions 123, 178, 179, 181, 209, and 210 each coordinate GTP. Residues cysteine 254 and cysteine 255 are each lipidated (S-geranylgeranyl cysteine).

This sequence belongs to the small GTPase superfamily. Rab family. As to quaternary structure, interacts with ADRA2B. Interacts with RIMS1. Mg(2+) is required as a cofactor. Expressed in pancreas, kidney, brain, submandibular gland, and lung.

It localises to the cytoplasmic vesicle. The protein resides in the secretory vesicle membrane. The protein localises to the golgi apparatus membrane. It catalyses the reaction GTP + H2O = GDP + phosphate + H(+). Regulated by guanine nucleotide exchange factors (GEFs) which promote the exchange of bound GDP for free GTP. Regulated by GTPase activating proteins (GAPs) which increase the GTP hydrolysis activity. Inhibited by GDP dissociation inhibitors (GDIs). Functionally, the small GTPases Rab are key regulators of intracellular membrane trafficking, from the formation of transport vesicles to their fusion with membranes. Rabs cycle between an inactive GDP-bound form and an active GTP-bound form that is able to recruit to membranes different set of downstream effectors directly responsible for vesicle formation, movement, tethering and fusion. RAB26 mediates transport of ADRA2A and ADRA2B from the Golgi to the cell membrane. Plays a role in the maturation of zymogenic granules and in pepsinogen secretion in the stomach. Plays a role in the secretion of amylase from acinar granules in the parotid gland. The sequence is that of Ras-related protein Rab-26 from Rattus norvegicus (Rat).